Consider the following 491-residue polypeptide: Glutamyl-tRNA(Gln) amidotransferase subunit A (491 aa).

Residues Lys79 and Ser154 each act as charge relay system in the active site. Residue Ser178 is the Acyl-ester intermediate of the active site.

This sequence belongs to the amidase family. GatA subfamily. In terms of assembly, heterotrimer of A, B and C subunits.

It catalyses the reaction L-glutamyl-tRNA(Gln) + L-glutamine + ATP + H2O = L-glutaminyl-tRNA(Gln) + L-glutamate + ADP + phosphate + H(+). Allows the formation of correctly charged Gln-tRNA(Gln) through the transamidation of misacylated Glu-tRNA(Gln) in organisms which lack glutaminyl-tRNA synthetase. The reaction takes place in the presence of glutamine and ATP through an activated gamma-phospho-Glu-tRNA(Gln). This chain is Glutamyl-tRNA(Gln) amidotransferase subunit A, found in Natranaerobius thermophilus (strain ATCC BAA-1301 / DSM 18059 / JW/NM-WN-LF).